We begin with the raw amino-acid sequence, 144 residues long: Maximins 3/H2 (144 aa).

An N-terminal signal peptide occupies residues 1 to 18 (MNFKYIVAVSFLIASAYA). 2 propeptides span residues 19-43 (RSVQ…REIR) and 74-123 (TAEE…KEKR). At isoleucine 143 the chain carries Isoleucine amide.

It belongs to the bombinin family. In terms of tissue distribution, expressed by the skin glands.

The protein localises to the secreted. Its function is as follows. Maximin-3 shows antibacterial activity against both Gram-positive and Gram-negative bacteria. It also shows antimicrobial activity against the fungus C.albicans, but not against A.flavus nor P.uticale. It has little hemolytic activity. It possess a significant cytotoxicity against tumor cell lines. It possess a significant anti-HIV activity. It shows high spermicidal activity. Maximin-H2 shows antibacterial activity against both Gram-positive and Gram-negative bacteria. It also shows antimicrobial activity against the fungus C.albicans. Shows strong hemolytic activity. The polypeptide is Maximins 3/H2 (Bombina maxima (Giant fire-bellied toad)).